The primary structure comprises 208 residues: FMN-dependent NADH:quinone oxidoreductase 4 (208 aa).

The protein belongs to the azoreductase type 1 family. In terms of assembly, homodimer. It depends on FMN as a cofactor.

The enzyme catalyses 2 a quinone + NADH + H(+) = 2 a 1,4-benzosemiquinone + NAD(+). It catalyses the reaction N,N-dimethyl-1,4-phenylenediamine + anthranilate + 2 NAD(+) = 2-(4-dimethylaminophenyl)diazenylbenzoate + 2 NADH + 2 H(+). Quinone reductase that provides resistance to thiol-specific stress caused by electrophilic quinones. In terms of biological role, also exhibits azoreductase activity. Catalyzes the reductive cleavage of the azo bond in aromatic azo compounds to the corresponding amines. This chain is FMN-dependent NADH:quinone oxidoreductase 4, found in Bacillus anthracis.